The chain runs to 821 residues: MPTVISASMAPRTGASQVPRTMPQAAQGKGTEAGVGNPGGKYSAIISRNFPIIGVKEKTFEQLHKKCLEKKVLYLDPEFPPDETSLFYSQKFPIQFVWKRPPEICENPRFIIGGANRTDICQGDLGDCWFLAAIACLTLNKRLLFRVIPHDQSFTENYAGIFHFQFWRYGDWVDVVIDDCLPTYNNQLVFTKSNHRNEFWSALLEKAYAKLHGSYEALKGGNTTEAMEDFTGGVTEFFEIKDAPRDMYKIMKKAIERGSLMGCSIDDGTNMTYGTSPSGLKMGDLIARMVRNMDESRLRDSDLIPEGCSDDRPTRTIVPVQFETRMACGLVKGHAYSVTGLEEALFKGEKVKLVRLRNPWGQVEWNGSWSDSWKDWSFVDKDEKARLQHQVTEDGEFWMSYDDFIYHFTKLEICNLTADALESDKLQTWTVSVNEGRWVRGCSAGGCRNFPDTFWTNPQYRLKLLEEDDDPDDSEVICSFLVALMQKNRRKDRKLGANLFTIGFAIYEVPKEMHGNKQHLQKDFFLYNASKARSRTYINMREVSERFRLPPSEYVIVPSTYEPHQEGEFILRVFSEKRNLSEEVENTISVDRPVRKKKTKPIIFVSDRANSNKELGVDQESEEGQDKTSPDKQEKSPKPEPSNTDQESEEQQQFRNIFRQIAGDDMEICADELKNVLNRVVNKHKDLKTEGFTLESCRSMIALMDTDGSGRLNLQEFHHLWKKIKSWQKIFKHYDTDQSGTINSYEMRNAVNDAGFHLNNQLYDIITMRYADKYMNIDFDSFICCFVRLEGMFRAFNAFDKDGDGIIKLNVLEWLQLTMYA.

A disordered region spans residues 1 to 34 (MPTVISASMAPRTGASQVPRTMPQAAQGKGTEAG). The 345-residue stretch at 73–417 (LYLDPEFPPD…FTKLEICNLT (345 aa)) folds into the Calpain catalytic domain. Residues Cys128, His334, and Asn358 contribute to the active site. The segment at 418 to 586 (ADALESDKLQ…KRNLSEEVEN (169 aa)) is domain III. Positions 587–649 (TISVDRPVRK…EPSNTDQESE (63 aa)) are linker. The disordered stretch occupies residues 603 to 652 (IFVSDRANSNKELGVDQESEEGQDKTSPDKQEKSPKPEPSNTDQESEEQQ). The span at 624-638 (GQDKTSPDKQEKSPK) shows a compositional bias: basic and acidic residues. Positions 641-652 (PSNTDQESEEQQ) are enriched in polar residues. EF-hand domains are found at residues 649–683 (EEQQQFRNIFRQIAGDDMEICADELKNVLNRVVNK), 692–725 (FTLESCRSMIALMDTDGSGRLNLQEFHHLWKKIK), 722–757 (KKIKSWQKIFKHYDTDQSGTINSYEMRNAVNDAGFH), and 787–821 (VRLEGMFRAFNAFDKDGDGIIKLNVLEWLQLTMYA). A domain IV region spans residues 650–821 (EQQQFRNIFR…LEWLQLTMYA (172 aa)). The Ca(2+) site is built by Ala662, Asp665, Glu667, Glu672, Asp705, Asp707, Ser709, Arg711, Glu716, Asp735, Asp737, Ser739, Thr741, Glu746, Asp800, Asp802, Asp804, and Ile806.

This sequence belongs to the peptidase C2 family. Homodimer; via EF-hand domain 4. Interacts with TTN/titin. Interacts with CMYA5; this interaction, which results in CMYA5 proteolysis, may protect CAPN3 from autolysis. Interacts with SIMC1. Interacts with UTP25; the interaction is required for CAPN3 translocation to the nucleolus. As to expression, skeletal muscle.

The protein localises to the cytoplasm. It is found in the nucleus. Its subcellular location is the nucleolus. The enzyme catalyses Broad endopeptidase activity.. Its activity is regulated as follows. Activated by micromolar concentrations of calcium and inhibited by calpastatin. In terms of biological role, calcium-regulated non-lysosomal thiol-protease. Proteolytically cleaves CTBP1. Mediates, with UTP25, the proteasome-independent degradation of p53/TP53. The protein is Calpain-3 (CAPN3) of Sus scrofa (Pig).